The primary structure comprises 341 residues: Phenylalanine--tRNA ligase alpha subunit (341 aa).

Glu-256 contributes to the Mg(2+) binding site.

It belongs to the class-II aminoacyl-tRNA synthetase family. Phe-tRNA synthetase alpha subunit type 1 subfamily. Tetramer of two alpha and two beta subunits. The cofactor is Mg(2+).

It localises to the cytoplasm. The catalysed reaction is tRNA(Phe) + L-phenylalanine + ATP = L-phenylalanyl-tRNA(Phe) + AMP + diphosphate + H(+). The protein is Phenylalanine--tRNA ligase alpha subunit of Clostridium perfringens (strain 13 / Type A).